The sequence spans 475 residues: Ribulose bisphosphate carboxylase large chain (475 aa).

A propeptide spanning residues 1 to 2 is cleaved from the precursor; sequence MS. At proline 3 the chain carries N-acetylproline. Residue lysine 14 is modified to N6,N6,N6-trimethyllysine. The substrate site is built by asparagine 123 and threonine 173. Lysine 175 functions as the Proton acceptor in the catalytic mechanism. Lysine 177 contributes to the substrate binding site. Mg(2+) is bound by residues lysine 201, aspartate 203, and glutamate 204. The residue at position 201 (lysine 201) is an N6-carboxylysine. The active-site Proton acceptor is histidine 294. Residues arginine 295, histidine 327, and serine 379 each contribute to the substrate site.

Belongs to the RuBisCO large chain family. Type I subfamily. As to quaternary structure, heterohexadecamer of 8 large chains and 8 small chains; disulfide-linked. The disulfide link is formed within the large subunit homodimers. The cofactor is Mg(2+). In terms of processing, the disulfide bond which can form in the large chain dimeric partners within the hexadecamer appears to be associated with oxidative stress and protein turnover.

The protein resides in the plastid. It localises to the chloroplast. It carries out the reaction 2 (2R)-3-phosphoglycerate + 2 H(+) = D-ribulose 1,5-bisphosphate + CO2 + H2O. The enzyme catalyses D-ribulose 1,5-bisphosphate + O2 = 2-phosphoglycolate + (2R)-3-phosphoglycerate + 2 H(+). RuBisCO catalyzes two reactions: the carboxylation of D-ribulose 1,5-bisphosphate, the primary event in carbon dioxide fixation, as well as the oxidative fragmentation of the pentose substrate in the photorespiration process. Both reactions occur simultaneously and in competition at the same active site. In Physcomitrium patens (Spreading-leaved earth moss), this protein is Ribulose bisphosphate carboxylase large chain.